We begin with the raw amino-acid sequence, 255 residues long: Indole-3-glycerol phosphate synthase (255 aa).

Belongs to the TrpC family.

It carries out the reaction 1-(2-carboxyphenylamino)-1-deoxy-D-ribulose 5-phosphate + H(+) = (1S,2R)-1-C-(indol-3-yl)glycerol 3-phosphate + CO2 + H2O. It participates in amino-acid biosynthesis; L-tryptophan biosynthesis; L-tryptophan from chorismate: step 4/5. This is Indole-3-glycerol phosphate synthase (trpC) from Priestia megaterium (strain ATCC 12872 / QMB1551) (Bacillus megaterium).